The following is a 142-amino-acid chain: MNEQTILGLDVGERRIGVAISDVEARIAAPLTTIPAHPPERAIAQIARLVAERGVRRVVVGLPLTMRGEHGPQAAAIQRFVDALAAVLNCPVEMFDERLTSVAAEQMLRNLGVKPAKIKEQIDQVAASIILQDYLDARRNPF.

The protein belongs to the YqgF nuclease family.

Its subcellular location is the cytoplasm. Could be a nuclease involved in processing of the 5'-end of pre-16S rRNA. The protein is Putative pre-16S rRNA nuclease of Chloroflexus aggregans (strain MD-66 / DSM 9485).